The primary structure comprises 330 residues: MLKESEDIEGIAIEGPWLEDDISLEEIIKKYYLKIGFQASHIGKAIKIWKHIEEKRKKGDEITVFFGYTSNIVSSGLREIIAYLVKHKKIDIIVTTAGGVEEDFIKCLKPFILGDWEVDGKMLREKGINRIGNIFVPNDRYIAFEEYMMEFFEEILNLQRETGKIITASEFCYKLGEFMDKKLKSKEKEKSILYWAYKNNIPIFCPAITDGSIGDMLYFFKKYNKDEELKIDVANDIVKLNDIAINSKETACIVLGGSLPKHSIINANLFREGTDYAIYVTTALPWDGSLSGAPPEEGVSWGKIGAKADYVEIWGDATIIFPLLVYCVMK.

K303 serves as the catalytic Nucleophile.

Belongs to the deoxyhypusine synthase family. NAD(+) is required as a cofactor.

The enzyme catalyses [eIF5A protein]-L-lysine + spermidine = [eIF5A protein]-deoxyhypusine + propane-1,3-diamine. It participates in protein modification; eIF5A hypusination. Functionally, catalyzes the NAD-dependent oxidative cleavage of spermidine and the subsequent transfer of the butylamine moiety of spermidine to the epsilon-amino group of a specific lysine residue of the eIF-5A precursor protein to form the intermediate deoxyhypusine residue. This Methanocaldococcus jannaschii (strain ATCC 43067 / DSM 2661 / JAL-1 / JCM 10045 / NBRC 100440) (Methanococcus jannaschii) protein is Probable deoxyhypusine synthase (dys).